A 54-amino-acid chain; its full sequence is Conotoxin vc5c (54 aa).

The N-terminal stretch at valine 1–alanine 14 is a signal peptide. The propeptide occupies valine 15–arginine 43. Glutamate 50 is modified (4-carboxyglutamate). At tryptophan 51 the chain carries 6'-bromotryptophan.

It belongs to the conotoxin T superfamily. In terms of processing, contains 2 disulfide bonds that can be either 'C1-C3, C2-C4' or 'C1-C4, C2-C3', since these disulfide connectivities have been observed for conotoxins with cysteine framework V (for examples, see AC P0DQQ7 and AC P81755). In terms of tissue distribution, expressed by the venom duct.

It localises to the secreted. This Conus victoriae (Queen Victoria cone) protein is Conotoxin vc5c.